A 227-amino-acid polypeptide reads, in one-letter code: uncharacterized protein (227 aa).

The next 2 helical transmembrane spans lie at 113 to 133 and 141 to 161; these read IMLI…FIVF and FGIC…NGLI.

The protein resides in the membrane. This is an uncharacterized protein from Dictyostelium discoideum (Social amoeba).